Reading from the N-terminus, the 481-residue chain is Regulator of G-protein signaling 1 (481 aa).

A disordered region spans residues methionine 1–lysine 31. Positions glutamine 33–asparagine 227 are fungal-DR. Residues proline 232–lysine 312 form the DEP domain. In terms of domain architecture, RGS spans isoleucine 344 to glutamate 474.

It is found in the nucleus. Its subcellular location is the cytoplasm. Functionally, negatively regulates pheromone signaling during mating. Acts in a negative feedback loop that is essential for the mating process. This loop acts to down-regulate cellular sensitivity to pheromone. Activated by ste11. This Schizosaccharomyces pombe (strain 972 / ATCC 24843) (Fission yeast) protein is Regulator of G-protein signaling 1 (rgs1).